A 501-amino-acid polypeptide reads, in one-letter code: 2,3-bisphosphoglycerate-independent phosphoglycerate mutase (501 aa).

Residues D10 and S60 each coordinate Mn(2+). S60 acts as the Phosphoserine intermediate in catalysis. Residues H121, 151-152 (RD), R182, R188, 256-259 (RPDR), and K329 contribute to the substrate site. 5 residues coordinate Mn(2+): D394, H398, D435, H436, and H453.

The protein belongs to the BPG-independent phosphoglycerate mutase family. Monomer. Mn(2+) serves as cofactor.

It carries out the reaction (2R)-2-phosphoglycerate = (2R)-3-phosphoglycerate. The protein operates within carbohydrate degradation; glycolysis; pyruvate from D-glyceraldehyde 3-phosphate: step 3/5. In terms of biological role, catalyzes the interconversion of 2-phosphoglycerate and 3-phosphoglycerate. The polypeptide is 2,3-bisphosphoglycerate-independent phosphoglycerate mutase (Mycoplasmopsis synoviae (strain 53) (Mycoplasma synoviae)).